We begin with the raw amino-acid sequence, 1441 residues long: Pleiotropic drug resistance protein TUR2 (1441 aa).

The region spanning 158–430 (LSALHLMPSG…FESMGFKCPE (273 aa)) is the ABC transporter 1 domain. Residue 191 to 198 (GPPGAGKT) participates in ATP binding. Residues 508 to 721 (ELLKACIDRE…AQNAIAVNEF (214 aa)) enclose the ABC transmembrane type-2 1 domain. 6 helical membrane passes run 526 to 546 (FVYI…MTVF), 559 to 579 (ATIF…NGFA), 614 to 634 (IPIS…VIGF), 646 to 666 (LLLV…AAVG), 671 to 691 (VADT…GFII), and 756 to 776 (IGVG…ILFL). The region spanning 843 to 1095 (ITFDNVKYSV…HLIKYFESID (253 aa)) is the ABC transporter 2 domain. 888-895 (GVSGRGKT) is an ATP binding site. One can recognise an ABC transmembrane type-2 2 domain in the interval 1168–1382 (MQCLACLWKQ…TLYGLVVSQF (215 aa)). 7 helical membrane-spanning segments follow: residues 1187–1207 (YTAT…TIFW), 1215–1235 (TSLD…FIGI), 1275–1295 (VPHI…MIGF), 1302–1322 (FLWY…YGMM), 1332–1352 (IAAI…GFII), 1363–1383 (WYYW…SQFG), and 1413–1433 (VVGV…AFSI).

Belongs to the ABC transporter superfamily. ABCG family. PDR (TC 3.A.1.205) subfamily. Ubiquitous.

It localises to the cell membrane. In terms of biological role, may be a general defense protein. Seems involved in turion (dormant buds) formation. Confers resistance to the diterpenoid antifungal agent sclareol. This chain is Pleiotropic drug resistance protein TUR2 (TUR2), found in Spirodela polyrhiza (Giant duckweed).